A 437-amino-acid chain; its full sequence is Serine hydroxymethyltransferase (437 aa).

(6S)-5,6,7,8-tetrahydrofolate-binding positions include Leu130 and 134-136 (GHL). An N6-(pyridoxal phosphate)lysine modification is found at Lys239.

This sequence belongs to the SHMT family. As to quaternary structure, homodimer. It depends on pyridoxal 5'-phosphate as a cofactor.

The protein localises to the cytoplasm. It catalyses the reaction (6R)-5,10-methylene-5,6,7,8-tetrahydrofolate + glycine + H2O = (6S)-5,6,7,8-tetrahydrofolate + L-serine. It functions in the pathway one-carbon metabolism; tetrahydrofolate interconversion. It participates in amino-acid biosynthesis; glycine biosynthesis; glycine from L-serine: step 1/1. Catalyzes the reversible interconversion of serine and glycine with tetrahydrofolate (THF) serving as the one-carbon carrier. This reaction serves as the major source of one-carbon groups required for the biosynthesis of purines, thymidylate, methionine, and other important biomolecules. Also exhibits THF-independent aldolase activity toward beta-hydroxyamino acids, producing glycine and aldehydes, via a retro-aldol mechanism. The polypeptide is Serine hydroxymethyltransferase (Bartonella quintana (strain Toulouse) (Rochalimaea quintana)).